Reading from the N-terminus, the 204-residue chain is Ribosomal RNA small subunit methyltransferase G (204 aa).

S-adenosyl-L-methionine is bound by residues Gly69, Phe74, 123 to 124, and Arg137; that span reads IE.

This sequence belongs to the methyltransferase superfamily. RNA methyltransferase RsmG family.

The protein localises to the cytoplasm. It carries out the reaction guanosine(527) in 16S rRNA + S-adenosyl-L-methionine = N(7)-methylguanosine(527) in 16S rRNA + S-adenosyl-L-homocysteine. Functionally, specifically methylates the N7 position of guanine in position 527 of 16S rRNA. The polypeptide is Ribosomal RNA small subunit methyltransferase G (Ruegeria pomeroyi (strain ATCC 700808 / DSM 15171 / DSS-3) (Silicibacter pomeroyi)).